A 235-amino-acid chain; its full sequence is Phosphoribosylaminoimidazole-succinocarboxamide synthase (235 aa).

It belongs to the SAICAR synthetase family.

It catalyses the reaction 5-amino-1-(5-phospho-D-ribosyl)imidazole-4-carboxylate + L-aspartate + ATP = (2S)-2-[5-amino-1-(5-phospho-beta-D-ribosyl)imidazole-4-carboxamido]succinate + ADP + phosphate + 2 H(+). The protein operates within purine metabolism; IMP biosynthesis via de novo pathway; 5-amino-1-(5-phospho-D-ribosyl)imidazole-4-carboxamide from 5-amino-1-(5-phospho-D-ribosyl)imidazole-4-carboxylate: step 1/2. This chain is Phosphoribosylaminoimidazole-succinocarboxamide synthase, found in Clostridium botulinum (strain Alaska E43 / Type E3).